A 780-amino-acid polypeptide reads, in one-letter code: Oocyte zinc finger protein XlCOF8.4 (780 aa).

15 C2H2-type zinc fingers span residues 250–272, 278–300, 306–328, 334–356, 362–384, 390–412, 418–440, 446–468, 474–496, 618–640, 646–668, 674–696, 702–724, 730–752, and 758–780; these read FPCS…RRTH, FSCS…HRTH, FSCS…QKTH, YSCS…RRTH, YSCS…WKTH, FSCV…YRTH, FSCF…LKIH, LSCS…QKTH, FSCS…RRTH, YSCS…WRTH, FSCT…HRTH, and FSCS…FQLH.

Belongs to the krueppel C2H2-type zinc-finger protein family.

Its subcellular location is the nucleus. In terms of biological role, may be involved in transcriptional regulation. In Xenopus laevis (African clawed frog), this protein is Oocyte zinc finger protein XlCOF8.4.